The primary structure comprises 114 residues: UPF0102 protein HPSH_02690 (114 aa).

This sequence belongs to the UPF0102 family.

This chain is UPF0102 protein HPSH_02690, found in Helicobacter pylori (strain Shi470).